The following is a 373-amino-acid chain: Putative citrate synthase 2 (373 aa).

Residues His-250 and Glu-303 contribute to the active site.

Belongs to the citrate synthase family.

The catalysed reaction is oxaloacetate + acetyl-CoA + H2O = citrate + CoA + H(+). It functions in the pathway carbohydrate metabolism; tricarboxylic acid cycle; isocitrate from oxaloacetate: step 1/2. This chain is Putative citrate synthase 2 (citA), found in Mycobacterium bovis (strain ATCC BAA-935 / AF2122/97).